A 153-amino-acid polypeptide reads, in one-letter code: Actin-related protein 2/3 complex subunit 5-like protein (153 aa).

At serine 64 the chain carries Phosphoserine.

Belongs to the ARPC5 family. May be a component of the Arp2/3 complex in which it may replace ARPC5.

Its subcellular location is the cytoplasm. The protein resides in the cytoskeleton. Functionally, may function as component of the Arp2/3 complex which is involved in regulation of actin polymerization and together with an activating nucleation-promoting factor (NPF) mediates the formation of branched actin networks. This Rattus norvegicus (Rat) protein is Actin-related protein 2/3 complex subunit 5-like protein (Arpc5l).